Here is a 36-residue protein sequence, read N- to C-terminus: MSDINATRLPVFSLPVFFPFVSDDIQAVLTRGESLC.

A propeptide spanning residues 1–10 (MSDINATRLP) is cleaved from the precursor. A cross-link (cyclopeptide (Val-Pro)) is located at residues 11-19 (VFSLPVFFP). Residues 20-36 (FVSDDIQAVLTRGESLC) constitute a propeptide that is removed on maturation.

The protein belongs to the MSDIN fungal toxin family. Processed by the macrocyclase-peptidase enzyme POPB to yield a toxic cyclic nonapeptide. POPB first removes 10 residues from the N-terminus. Conformational trapping of the remaining peptide forces the enzyme to release this intermediate rather than proceed to macrocyclization. The enzyme rebinds the remaining peptide in a different conformation and catalyzes macrocyclization of the N-terminal 9 residues. Expressed in basidiocarps.

Its function is as follows. Cyclic nonapeptide that belongs to the MSDIN-like toxin family responsible for a large number of food poisoning cases and deaths. This Amanita exitialis (Guangzhou destroying angel) protein is Amanexitide proprotein 2.